The chain runs to 451 residues: uncharacterized protein (451 aa).

A TRAM domain is found at 2–60 (VVKVKQKIPLKIKRMGINGEGIGFYQKTLVFVPGALKGENIFCQITAVKRNFAEAKLLT). [4Fe-4S] cluster is bound by residues Cys73, Cys79, Cys82, and Cys162. Positions 283, 312, 333, and 381 each coordinate S-adenosyl-L-methionine. The active-site Nucleophile is the Cys408.

Belongs to the class I-like SAM-binding methyltransferase superfamily. RNA M5U methyltransferase family.

This is an uncharacterized protein from Streptococcus pyogenes serotype M3 (strain ATCC BAA-595 / MGAS315).